The following is a 381-amino-acid chain: Ceramide-binding protein svf-1 (381 aa).

Residues 1-18 (MFKWAQAALANVAGTKEP) are peripherally associates with membranes.

It belongs to the SVF1 family.

It is found in the golgi apparatus. The protein resides in the cis-Golgi network membrane. Its subcellular location is the endoplasmic reticulum membrane. The protein localises to the cytoplasm. It localises to the nucleus. In terms of biological role, ceramide-binding protein that may transfer ceramides from the endoplasmic reticulum membrane to the cis-Golgi network membrane, and is thereby required for the biosynthesis of complex sphingolipids. This is Ceramide-binding protein svf-1 (svf-1) from Neurospora crassa (strain ATCC 24698 / 74-OR23-1A / CBS 708.71 / DSM 1257 / FGSC 987).